The sequence spans 344 residues: Phenylalanine--tRNA ligase alpha subunit (344 aa).

A Mg(2+)-binding site is contributed by glutamate 256.

The protein belongs to the class-II aminoacyl-tRNA synthetase family. Phe-tRNA synthetase alpha subunit type 1 subfamily. As to quaternary structure, tetramer of two alpha and two beta subunits. Mg(2+) is required as a cofactor.

Its subcellular location is the cytoplasm. It catalyses the reaction tRNA(Phe) + L-phenylalanine + ATP = L-phenylalanyl-tRNA(Phe) + AMP + diphosphate + H(+). This Bacillus pumilus (strain SAFR-032) protein is Phenylalanine--tRNA ligase alpha subunit.